We begin with the raw amino-acid sequence, 675 residues long: MVNAMVERATSEMLIGPDWAMNLEICDMLNSDPAQAKDVVKGIKKRIGSRNPKAQLLALTLLETIVKNCGDMVHMHVAEKGVIHEMVRIVKKKPDFHVKEKILVLIDTWQEAFGGPRARYPQYYAGYQELLRAGAVFPQRSERSAPVFTPPQTQPLTSYPPNLRNAGPGNDVPEPSAEPEFPTLSLSEIQNAKGIMDVLAEMLSALEPGNKEDLKQEVMVDLVEQCRTYKQRVVHLVNSTSDESLLCQGLALNDDLQRVLTNYEAIASGLPGTSSQIEKPKSETGKSLVDVDGPLIDTGDSSNQANGATSSSGNGVLNQLALPAPPVTNGSANSKIDLLSGDDLALVPVGPPQPASPVASDQNALALIDMFSDNTNNPSPATAPSGNPAQNIPLNPQGHQQPNSQAGEAGLQQSNGFAPQVGYSQFEQPSYGQGVSSPWSSQPAQQPVQPSYGAQDSTAFPPPPWEAQLQDYSPSAESGSPFSPGMHPTQTAFTHAQPVNNNNPYPQIPQTGPPVNNNSPYAQMPQTGQAVANISPYPQIPQNGVYMPNQPNQALGSGYQPQQQQQQQMMMAQYYAQQQQLQQQQQQQAYGNQMGGYGYGYNQQQQGSSPYLDQQMYGLSMRDQTSHQVASSSSTTSYLPPMKPKNKPEDKLFGDLVDISKFKPTKPTSGRAGTM.

In terms of domain architecture, VHS spans 9–138 (ATSEMLIGPD…ELLRAGAVFP (130 aa)). Disordered stretches follow at residues 144–181 (SAPVFTPPQTQPLTSYPPNLRNAGPGNDVPEPSAEPEF), 270–322 (LPGT…QLAL), 371–524 (FSDN…YAQM), 542–561 (QNGVYMPNQPNQALGSGYQP), and 622–675 (RDQT…AGTM). Residues 180 to 268 (EFPTLSLSEI…VLTNYEAIAS (89 aa)) enclose the GAT domain. Composition is skewed to polar residues over residues 299-317 (GDSSNQANGATSSSGNGVL) and 372-435 (SDNT…GQGV). Low complexity predominate over residues 436–451 (SSPWSSQPAQQPVQPS). Polar residues-rich tracts occupy residues 470–481 (QDYSPSAESGSP) and 488–524 (PTQTAFTHAQPVNNNNPYPQIPQTGPPVNNNSPYAQM). The span at 646 to 661 (NKPEDKLFGDLVDISK) shows a compositional bias: basic and acidic residues.

The protein belongs to the TOM1 family. In terms of assembly, interacts with ELC/VPS23A and ELCL/VPS23B. Ubiquitously expressed.

It localises to the cytoplasm. The protein localises to the membrane. Functionally, might contribute to the loading of the ESCRT machinery. The polypeptide is TOM1-like protein 9 (Arabidopsis thaliana (Mouse-ear cress)).